The sequence spans 227 residues: ATP-dependent dethiobiotin synthetase BioD (227 aa).

An ATP-binding site is contributed by 13-18; sequence DIGKTY. Thr-17 is a Mg(2+) binding site. The active site involves Lys-38. Ser-42 contacts substrate. Residues Asp-55, 116-119, and 179-180 contribute to the ATP site; these read EGSG and NN. 2 residues coordinate Mg(2+): Asp-55 and Glu-116.

It belongs to the dethiobiotin synthetase family. In terms of assembly, homodimer. Requires Mg(2+) as cofactor.

Its subcellular location is the cytoplasm. The enzyme catalyses (7R,8S)-7,8-diammoniononanoate + CO2 + ATP = (4R,5S)-dethiobiotin + ADP + phosphate + 3 H(+). Its pathway is cofactor biosynthesis; biotin biosynthesis; biotin from 7,8-diaminononanoate: step 1/2. Catalyzes a mechanistically unusual reaction, the ATP-dependent insertion of CO2 between the N7 and N8 nitrogen atoms of 7,8-diaminopelargonic acid (DAPA, also called 7,8-diammoniononanoate) to form a ureido ring. The chain is ATP-dependent dethiobiotin synthetase BioD from Clostridium botulinum (strain Eklund 17B / Type B).